We begin with the raw amino-acid sequence, 238 residues long: 3-dehydroquinate dehydratase (238 aa).

3-dehydroquinate contacts are provided by residues 35–37 and arginine 68; that span reads ELR. The Proton donor/acceptor role is filled by histidine 131. Residue lysine 158 is the Schiff-base intermediate with substrate of the active site. 2 residues coordinate 3-dehydroquinate: arginine 200 and glutamine 223.

Belongs to the type-I 3-dehydroquinase family. In terms of assembly, homodimer.

The enzyme catalyses 3-dehydroquinate = 3-dehydroshikimate + H2O. Its pathway is metabolic intermediate biosynthesis; chorismate biosynthesis; chorismate from D-erythrose 4-phosphate and phosphoenolpyruvate: step 3/7. Its function is as follows. Involved in the third step of the chorismate pathway, which leads to the biosynthesis of aromatic amino acids. Catalyzes the cis-dehydration of 3-dehydroquinate (DHQ) and introduces the first double bond of the aromatic ring to yield 3-dehydroshikimate. This Staphylococcus epidermidis (strain ATCC 35984 / DSM 28319 / BCRC 17069 / CCUG 31568 / BM 3577 / RP62A) protein is 3-dehydroquinate dehydratase.